We begin with the raw amino-acid sequence, 150 residues long: N-alpha-acetyltransferase 30 (150 aa).

The N-acetyltransferase domain occupies 2-150; sequence VTIVPYSHQY…DAFRYILYPN (149 aa).

It belongs to the acetyltransferase family. MAK3 subfamily.

It localises to the cytoplasm. It is found in the nucleus. It carries out the reaction N-terminal L-methionyl-L-leucyl-[protein] + acetyl-CoA = N-terminal N(alpha)-acetyl-L-methionyl-L-leucyl-[protein] + CoA + H(+). The enzyme catalyses N-terminal L-methionyl-L-isoleucyl-[protein] + acetyl-CoA = N-terminal N(alpha)-acetyl-L-methionyl-L-isoleucyl-[protein] + CoA + H(+). It catalyses the reaction N-terminal L-methionyl-L-phenylalanyl-[protein] + acetyl-CoA = N-terminal N(alpha)-acetyl-L-methionyl-L-phenylalanyl-[protein] + CoA + H(+). The catalysed reaction is N-terminal L-methionyl-L-tryptophyl-[protein] + acetyl-CoA = N-terminal N(alpha)-acetyl-L-methionyl-L-tryptophyl-[protein] + CoA + H(+). It carries out the reaction N-terminal L-methionyl-L-tyrosyl-[protein] + acetyl-CoA = N-terminal N(alpha)-acetyl-L-methionyl-L-tyrosyl-[protein] + CoA + H(+). In terms of biological role, catalytic component of the NatC N-terminal acetyltransferase. The protein is N-alpha-acetyltransferase 30 (naa30) of Schizosaccharomyces pombe (strain 972 / ATCC 24843) (Fission yeast).